The chain runs to 1049 residues: Multiple C2 domain and transmembrane region protein 16 (1049 aa).

One can recognise a C2 1 domain in the interval 1–112; the sequence is MATTRKLVVE…VGQGEEALIY (112 aa). A disordered region spans residues 136–249; that stretch reads DEKPPPLKPT…PPQNQPDGED (114 aa). Composition is skewed to basic and acidic residues over residues 153–170 and 226–238; these read VEEKTEETKAEGPDESKP and ESDKNEAEAKPVE. C2 domains follow at residues 302-426, 460-582, and 617-745; these read TSEI…PQWY, TAGN…SRWL, and VCSD…RNTY. Ca(2+) is bound by residues serine 338, aspartate 390, threonine 393, and serine 398. The next 2 membrane-spanning stretches (helical) occupy residues 883-903 and 989-1009; these read VMLIWFPDLIVPTLAFYLFVI and ATGIFVGLCFFVALVLYLVPT.

This sequence belongs to the MCTP family. Ca(2+) serves as cofactor. In terms of tissue distribution, expressed in the vascular tissues of roots, cotyledons and rosette leaves. Accumulates in roots meristems and shoot apical meristems (SAMs). Observed in flowers.

The protein localises to the endoplasmic reticulum membrane. Its function is as follows. May function as a signaling molecule by regulating the trafficking of other regulators. The protein is Multiple C2 domain and transmembrane region protein 16 of Arabidopsis thaliana (Mouse-ear cress).